The primary structure comprises 216 residues: Kynurenine formamidase (216 aa).

Residue Trp24 participates in substrate binding. Residues His54, His58, and Asp60 each contribute to the Zn(2+) site. The Proton donor/acceptor role is filled by His64. His164 and Glu176 together coordinate Zn(2+).

The protein belongs to the Cyclase 1 superfamily. KynB family. In terms of assembly, homodimer. Zn(2+) is required as a cofactor.

It carries out the reaction N-formyl-L-kynurenine + H2O = L-kynurenine + formate + H(+). The protein operates within amino-acid degradation; L-tryptophan degradation via kynurenine pathway; L-kynurenine from L-tryptophan: step 2/2. Catalyzes the hydrolysis of N-formyl-L-kynurenine to L-kynurenine, the second step in the kynurenine pathway of tryptophan degradation. The protein is Kynurenine formamidase of Erythrobacter litoralis (strain HTCC2594).